A 426-amino-acid polypeptide reads, in one-letter code: Dihydroorotase (426 aa).

Residues H58 and H60 each contribute to the Zn(2+) site. Substrate is bound by residues 60–62 (HLR) and N92. D150, H177, and H230 together coordinate Zn(2+). N276 is a substrate binding site. D303 serves as a coordination point for Zn(2+). Residue D303 is part of the active site. Substrate-binding positions include H307 and 321–322 (FG).

This sequence belongs to the metallo-dependent hydrolases superfamily. DHOase family. Class I DHOase subfamily. It depends on Zn(2+) as a cofactor.

It catalyses the reaction (S)-dihydroorotate + H2O = N-carbamoyl-L-aspartate + H(+). The protein operates within pyrimidine metabolism; UMP biosynthesis via de novo pathway; (S)-dihydroorotate from bicarbonate: step 3/3. Its function is as follows. Catalyzes the reversible cyclization of carbamoyl aspartate to dihydroorotate. This is Dihydroorotase from Listeria welshimeri serovar 6b (strain ATCC 35897 / DSM 20650 / CCUG 15529 / CIP 8149 / NCTC 11857 / SLCC 5334 / V8).